Consider the following 333-residue polypeptide: MAGNIEVEEDDRVPLRLRPEWSDVTPIPQDDGPSPVVPINYSEEFSEVMDYFRAVYFAKELSSRALALTAEAIGLNAGNYTVWHFRRLLLESLKVDLHVEREFVERVASGNSKNYQIWHHRRWVAEKLGPEARNSELEFTKKILSVDAKHYHAWSHRQWVLQNLGGWEDELSYCSELLAEDIFNNSAWNQRYFVITRSPVLGGLKAMRESEVLFTVEAIISYPENESSWRYLRGLFKDESTLYVNDAQVSSLCLKILKTKSNYLFALSTLLDLSASVIQPNEDFRDAIEALRLQILIKQDSDIAITICSILEQVDPIRVNYWVWRKSRLPQAA.

PFTA repeat units lie at residues 61–95 (LSSR…SLKV), 96–130 (DLHV…KLGP), 132–166 (ARNS…NLGG), 167–200 (WEDE…RSPV), and 207–241 (MRES…DEST).

Belongs to the protein prenyltransferase subunit alpha family. As to quaternary structure, heterodimer of FTA and FTB (farnesyltransferase). Heterodimer of an alpha and a beta subunit. The cofactor is Mg(2+).

The catalysed reaction is L-cysteinyl-[protein] + (2E,6E)-farnesyl diphosphate = S-(2E,6E)-farnesyl-L-cysteinyl-[protein] + diphosphate. It carries out the reaction geranylgeranyl diphosphate + L-cysteinyl-[protein] = S-geranylgeranyl-L-cysteinyl-[protein] + diphosphate. Essential subunit of both the farnesyltransferase and the geranylgeranyltransferase complex. Contributes to the transfer of a farnesyl or geranylgeranyl moiety from farnesyl or geranylgeranyl diphosphate to a cysteine at the fourth position from the C-terminus of several proteins having the C-terminal sequence Cys-aliphatic-aliphatic-X. This chain is Protein farnesyltransferase/geranylgeranyltransferase type-1 subunit alpha (FTA), found in Pisum sativum (Garden pea).